Reading from the N-terminus, the 284-residue chain is uncharacterized protein (284 aa).

An FMN-binding site is contributed by glutamine 54. Cysteine 83 functions as the Proton donor in the catalytic mechanism. FMN contacts are provided by residues lysine 125, histidine 153, asparagine 183–glycine 185, and alanine 207–asparagine 208.

The protein belongs to the Dus family. FMN is required as a cofactor.

Functionally, catalyzes the synthesis of dihydrouridine, a modified base found in the D-loop of most tRNAs. This is an uncharacterized protein from Caenorhabditis elegans.